A 299-amino-acid polypeptide reads, in one-letter code: MFENNRVRIAMQKTGRLSKDSIRLLTSCGVKINLKQQKLIAFAENMPIDVMLVRDDDIPGLVMDGVVDLGIVGENVLEEELLKRKSQKSECSYITLRRLDFGVCRLSLALPVNTIYTNITCLKNIRIATSYPHLLKKYLDEKNISFKSCMLNGSVEVAPRAGLADAICDLVSTGATLEANGLREVQVVYHSHACLICKTGNINSIKKEFINKLMTRIKGVIKARESKYIMLHAPIKQLEAVISLLHGAERPTILKLAGDDNRVAMHMVSSETLFWETMEKLKLLGASSILVLPIEKMME.

It belongs to the ATP phosphoribosyltransferase family. Long subfamily. In terms of assembly, equilibrium between an active dimeric form, an inactive hexameric form and higher aggregates. Interconversion between the various forms is largely reversible and is influenced by the natural substrates and inhibitors of the enzyme. Requires Mg(2+) as cofactor.

The protein resides in the cytoplasm. It catalyses the reaction 1-(5-phospho-beta-D-ribosyl)-ATP + diphosphate = 5-phospho-alpha-D-ribose 1-diphosphate + ATP. It participates in amino-acid biosynthesis; L-histidine biosynthesis; L-histidine from 5-phospho-alpha-D-ribose 1-diphosphate: step 1/9. With respect to regulation, feedback inhibited by histidine. Catalyzes the condensation of ATP and 5-phosphoribose 1-diphosphate to form N'-(5'-phosphoribosyl)-ATP (PR-ATP). Has a crucial role in the pathway because the rate of histidine biosynthesis seems to be controlled primarily by regulation of HisG enzymatic activity. In Buchnera aphidicola subsp. Acyrthosiphon pisum (strain 5A), this protein is ATP phosphoribosyltransferase.